The following is a 567-amino-acid chain: Phenylalanine ammonia-lyase (567 aa).

Tyr-78 functions as the Proton donor/acceptor in the catalytic mechanism. The segment at residues 167-169 (ASG) is a cross-link (5-imidazolinone (Ala-Gly)). A 2,3-didehydroalanine (Ser) modification is found at Ser-168. Residues Asn-223, Gln-311, Arg-317, Asn-347, Lys-419, Glu-448, and Asn-451 each coordinate (E)-cinnamate.

This sequence belongs to the PAL/histidase family. In terms of assembly, homotetramer. Post-translationally, contains an active site 4-methylidene-imidazol-5-one (MIO), which is formed autocatalytically by cyclization and dehydration of residues Ala-Ser-Gly.

Its subcellular location is the cytoplasm. It carries out the reaction L-phenylalanine = (E)-cinnamate + NH4(+). Its pathway is phenylpropanoid metabolism; trans-cinnamate biosynthesis; trans-cinnamate from L-phenylalanine: step 1/1. Its function is as follows. Catalyzes the non-oxidative deamination of L-phenylalanine to form trans-cinnamic acid, the first step in the phenylpropanoid pathway. In Trichormus variabilis (strain ATCC 29413 / PCC 7937) (Anabaena variabilis), this protein is Phenylalanine ammonia-lyase.